A 128-amino-acid polypeptide reads, in one-letter code: MRFAIVVTGPAYGTQQASSAFQFAQALIVEGHELSSVFFYREGVYNANQLTSPASDEFDLVRGWQQLNAQHGVALNICVAAALRRGIVDETEAGRLGLASSNLQPGFTLSGLGALAEASLTCDRVVQF.

Cysteine 78 functions as the Cysteine persulfide intermediate in the catalytic mechanism.

This sequence belongs to the DsrE/TusD family. Heterohexamer, formed by a dimer of trimers. The hexameric TusBCD complex contains 2 copies each of TusB, TusC and TusD. The TusBCD complex interacts with TusE.

The protein resides in the cytoplasm. Part of a sulfur-relay system required for 2-thiolation of 5-methylaminomethyl-2-thiouridine (mnm(5)s(2)U) at tRNA wobble positions. Accepts sulfur from TusA and transfers it in turn to TusE. The polypeptide is Sulfurtransferase TusD (Escherichia coli O139:H28 (strain E24377A / ETEC)).